A 577-amino-acid polypeptide reads, in one-letter code: Sulfite reductase [NADPH] hemoprotein beta-component 2 (577 aa).

Positions 441, 447, 486, and 490 each coordinate [4Fe-4S] cluster. C490 contacts siroheme.

Belongs to the nitrite and sulfite reductase 4Fe-4S domain family. As to quaternary structure, alpha(8)-beta(8). The alpha component is a flavoprotein, the beta component is a hemoprotein. The cofactor is siroheme. It depends on [4Fe-4S] cluster as a cofactor.

It carries out the reaction hydrogen sulfide + 3 NADP(+) + 3 H2O = sulfite + 3 NADPH + 4 H(+). The protein operates within sulfur metabolism; hydrogen sulfide biosynthesis; hydrogen sulfide from sulfite (NADPH route): step 1/1. Functionally, component of the sulfite reductase complex that catalyzes the 6-electron reduction of sulfite to sulfide. This is one of several activities required for the biosynthesis of L-cysteine from sulfate. The sequence is that of Sulfite reductase [NADPH] hemoprotein beta-component 2 from Pectobacterium carotovorum subsp. carotovorum (strain PC1).